A 177-amino-acid polypeptide reads, in one-letter code: Small ribosomal subunit protein uS5 (177 aa).

In terms of domain architecture, S5 DRBM spans 21-84 (LKEKMVSVNR…DEARQRMVRV (64 aa)).

Belongs to the universal ribosomal protein uS5 family. In terms of assembly, part of the 30S ribosomal subunit. Contacts proteins S4 and S8.

In terms of biological role, with S4 and S12 plays an important role in translational accuracy. Its function is as follows. Located at the back of the 30S subunit body where it stabilizes the conformation of the head with respect to the body. The sequence is that of Small ribosomal subunit protein uS5 from Nitrosomonas europaea (strain ATCC 19718 / CIP 103999 / KCTC 2705 / NBRC 14298).